Reading from the N-terminus, the 346-residue chain is MNTQLFSPFTIQNVTLKNRIVMSPMCMYSSENEDGKVTNFHLIHYGTRAMGQVGLVMLEATAVAAEGRISNKDLGIWNDEHIEGLQKTVSFIKEHDSKAAIQLAHAGRKAELHTDPVAPSAIPFNDKMKVPVAMSKEQIQDTITAFQKAAIRSKQAGFDVIELHGAHGYLINEFLSPLSNKRTDEYGGTAENRYRFLREIIHAVKEVWEGPLFVRISADDYHPEGLTVNDYVQFAKWMKEQGVDLIDCSSGAVVPAHIDVYPGYQVKYAKHLKEHAQIATGAVGLITSGVQAEQILVNSEADLIFVGRELLRNPYFPRTAANELGFELKDPHQYSRAPGKIANTSK.

An FMN-binding site is contributed by 23 to 26 (SPMC). Y28 is a substrate binding site. FMN is bound by residues A60 and Q102. 164–167 (HGAH) is a binding site for substrate. Residues R215 and 307–308 (GR) each bind FMN.

This sequence belongs to the NADH:flavin oxidoreductase/NADH oxidase family. NamA subfamily. As to quaternary structure, homotetramer. Requires FMN as cofactor.

The enzyme catalyses A + NADPH + H(+) = AH2 + NADP(+). In terms of biological role, catalyzes the reduction of the double bond of an array of alpha,beta-unsaturated aldehydes and ketones. It also reduces the nitro group of nitroester and nitroaromatic compounds. It could have a role in detoxification processes. This Bacillus cytotoxicus (strain DSM 22905 / CIP 110041 / 391-98 / NVH 391-98) protein is NADPH dehydrogenase.